Here is a 29-residue protein sequence, read N- to C-terminus: Cyclotide mra2 (29 aa).

3 cysteine pairs are disulfide-bonded: Cys4-Cys19, Cys8-Cys21, and Cys13-Cys26.

This is a cyclic peptide. Post-translationally, contains 3 disulfide bonds.

Its function is as follows. Probably participates in a plant defense mechanism. The sequence is that of Cyclotide mra2 from Melicytus ramiflorus (Whitey wood).